The sequence spans 553 residues: Cytokine-like nuclear factor N-PAC (553 aa).

The PWWP domain maps to 8 to 66; the sequence is LGDLVWGKLGRYPPWPGKIVNPPKDLKKPRGKKCFFVKFFGTEDHAWIKVEQLKPYHLH. Basic and acidic residues-rich tracts occupy residues 92-145 and 162-182; these read KTKG…EGKK and RAQDQSPRKRGRPPKDEKDLT. The disordered stretch occupies residues 92–188; that stretch reads KTKGKDQASS…KDLTIPESST (97 aa). Positions 168–180 form a DNA-binding region, a.T hook; that stretch reads PRKRGRPPKDEKD. The tract at residues 214–217 is interaction with histone H3; sequence DPHF. Residues 261 to 553 form a dehydrogenase domain region; the sequence is GSITPTDKKI…MSAVYRAYIH (293 aa). Residues 271–285, Thr-362, and Lys-505 contribute to the NAD(+) site; that span reads GFLGLGLMGSGIVSN.

It belongs to the HIBADH-related family. NP60 subfamily. Homotetramere. Binds to mononucleosomes.

It localises to the nucleus. Its subcellular location is the chromosome. Its function is as follows. Cytokine-like nuclear factor with chromatin gene reader activity involved in chromatin modification and regulation of gene expression. Acts as a nucleosome-destabilizing factor that is recruited to genes during transcriptional activation. Recognizes and binds histone H3 without a preference for specific epigenetic markers and also binds DNA. Interacts with KDM1B and promotes its histone demethylase activity by facilitating the capture of H3 tails, they form a multifunctional enzyme complex that modifies transcribed chromatin and facilitates Pol II transcription through nucleosomes. The chain is Cytokine-like nuclear factor N-PAC (GLYR1) from Gallus gallus (Chicken).